A 1230-amino-acid chain; its full sequence is ATP-dependent helicase/nuclease subunit A (1230 aa).

Residues 4–480 form the UvrD-like helicase ATP-binding domain; the sequence is RNWTGPQEAA…IDLSHNFRSR (477 aa). 25 to 32 is a binding site for ATP; that stretch reads AGAGSGKT. The 283-residue stretch at 517–799 folds into the UvrD-like helicase C-terminal domain; sequence AQLEGSGPPV…RIMSIHQAKG (283 aa). Positions 535–554 are disordered; that stretch reads TSVGRDTAGTADDEPDRSDE. Residues 545–554 are compositionally biased toward acidic residues; the sequence is ADDEPDRSDE.

It belongs to the helicase family. AddA subfamily. In terms of assembly, heterodimer of AddA and AddB/RexB. Requires Mg(2+) as cofactor.

It catalyses the reaction Couples ATP hydrolysis with the unwinding of duplex DNA by translocating in the 3'-5' direction.. It carries out the reaction ATP + H2O = ADP + phosphate + H(+). Functionally, the heterodimer acts as both an ATP-dependent DNA helicase and an ATP-dependent, dual-direction single-stranded exonuclease. Recognizes the chi site generating a DNA molecule suitable for the initiation of homologous recombination. The AddA nuclease domain is required for chi fragment generation; this subunit has the helicase and 3' -&gt; 5' nuclease activities. The polypeptide is ATP-dependent helicase/nuclease subunit A (Desulforudis audaxviator (strain MP104C)).